The chain runs to 287 residues: Ethylene-inducing xylanase 3 (287 aa).

Residues 1-19 form the signal peptide; the sequence is MVCFSSLFVAASAIAVVFA. Residues 31–219 form the GH11 domain; it reads QSTPSSQGTH…SSGSARINVA (189 aa). Glutamate 115 functions as the Nucleophile in the catalytic mechanism. Glutamate 206 functions as the Proton donor in the catalytic mechanism. In terms of domain architecture, CBM1 spans 252 to 287; it reads SCAARWGQCGGSGWNGATCCSAGTCQAQNQWYSQCL.

This sequence belongs to the glycosyl hydrolase 11 (cellulase G) family.

The catalysed reaction is Endohydrolysis of (1-&gt;4)-beta-D-xylosidic linkages in xylans.. Its pathway is glycan degradation; xylan degradation. Functionally, endo-1,4-beta-xylanase involved in the hydrolysis of xylan, a major structural heterogeneous polysaccharide found in plant biomass representing the second most abundant polysaccharide in the biosphere, after cellulose. Exhibits immunity-inducing activity and induces cell death in Nicotiana benthamiana. This Verticillium longisporum (Verticillium dahliae var. longisporum) protein is Ethylene-inducing xylanase 3.